Here is a 139-residue protein sequence, read N- to C-terminus: MSKNMRYPVKFEHDETGWAVMFPDIPEALTGGDTREEALAMAQDALVTAFDFYFEDRREIPTPSTKGEAFVEVPASIAAKVLLLNTMLQTRTSNAELARLLGTRPQEIQRIVSLSHSTKIDTIANALNALGKHLELVAI.

One can recognise an HTH cro/C1-type domain in the interval 87–137 (MLQTRTSNAELARLLGTRPQEIQRIVSLSHSTKIDTIANALNALGKHLELV). A DNA-binding region (H-T-H motif) is located at residues 96–113 (ELARLLGTRPQEIQRIVS).

The protein belongs to the HicB antitoxin family. Probably forms a complex with the probable mRNA interferase HicA2 (its cognate toxin); when complexed with HicA inhibits the toxin activity.

Functionally, antitoxin component of a type II toxin-antitoxin (TA) system. Functions as an mRNA interferase antitoxin preventing effects of the HicA 2 toxin. The sequence is that of Antitoxin HicB 2 (hicB2) from Photorhabdus laumondii subsp. laumondii (strain DSM 15139 / CIP 105565 / TT01) (Photorhabdus luminescens subsp. laumondii).